A 208-amino-acid chain; its full sequence is Recombination protein RecR (208 aa).

Residues 57 to 72 (CALCNTLTEQEVCVTC) form a C4-type zinc finger. Residues 80 to 187 (SKLCVVETPA…QVTRLARGVP (108 aa)) form the Toprim domain.

Belongs to the RecR family.

In terms of biological role, may play a role in DNA repair. It seems to be involved in an RecBC-independent recombinational process of DNA repair. It may act with RecF and RecO. The chain is Recombination protein RecR from Polaromonas naphthalenivorans (strain CJ2).